Consider the following 356-residue polypeptide: Protein RecA (356 aa).

67–74 is a binding site for ATP; it reads GPESSGKT.

This sequence belongs to the RecA family.

It is found in the cytoplasm. Can catalyze the hydrolysis of ATP in the presence of single-stranded DNA, the ATP-dependent uptake of single-stranded DNA by duplex DNA, and the ATP-dependent hybridization of homologous single-stranded DNAs. It interacts with LexA causing its activation and leading to its autocatalytic cleavage. The protein is Protein RecA of Yersinia pseudotuberculosis serotype I (strain IP32953).